The primary structure comprises 118 residues: D-dopachrome decarboxylase (118 aa).

Proline 2 carries the N-acetylproline modification.

This sequence belongs to the MIF family. As to quaternary structure, homotrimer.

It localises to the cytoplasm. The enzyme catalyses D-dopachrome + H(+) = 5,6-dihydroxyindole + CO2. Tautomerization of D-dopachrome with decarboxylation to give 5,6-dihydroxyindole (DHI). The chain is D-dopachrome decarboxylase (DDT) from Gallus gallus (Chicken).